Reading from the N-terminus, the 429-residue chain is Protein phosphatase 2C homolog 2 (429 aa).

In terms of domain architecture, PPM-type phosphatase spans 16-291 (LYGLSAMQGW…DNMTMIIIGL (276 aa)). Mn(2+) is bound by residues aspartate 64, glycine 65, aspartate 233, and aspartate 282. Disordered regions lie at residues 320–348 (YGKS…NDRS) and 384–429 (RDVT…SASS). The span at 384 to 397 (RDVTNHLQHDKAEE) shows a compositional bias: basic and acidic residues. Residues 405–419 (SESPSSANKNSSGSG) are compositionally biased toward low complexity.

The protein belongs to the PP2C family. Requires Mg(2+) as cofactor. Mn(2+) serves as cofactor.

Its subcellular location is the cytoplasm. The protein resides in the nucleus. The enzyme catalyses O-phospho-L-seryl-[protein] + H2O = L-seryl-[protein] + phosphate. It carries out the reaction O-phospho-L-threonyl-[protein] + H2O = L-threonyl-[protein] + phosphate. Dephosphorylating regulator for many key proteins. Dephosphorylates sakA, to negatively regulate the stress-activated p38MAPK cascade. This chain is Protein phosphatase 2C homolog 2, found in Aspergillus fumigatus (strain ATCC MYA-4609 / CBS 101355 / FGSC A1100 / Af293) (Neosartorya fumigata).